Here is a 1322-residue protein sequence, read N- to C-terminus: Flocculation protein FLO9 (1322 aa).

The first 24 residues, 1–24 (MSLAHYCLLLAIVTLLGLTNVVSA), serve as a signal peptide directing secretion. In terms of domain architecture, PA14 spans 74–249 (GGQTDISIDY…GTTVSDDFEG (176 aa)). Asn135, Asn187, Asn203, Asn257, Asn262, and Asn270 each carry an N-linked (GlcNAc...) asparagine glycan. Positions 197-240 (NGSPPDNITGTVYMYAGFYYPMKIVYSNAVAWGTLPISVTLPDG) are sugar recognition. A run of 13 repeats spans residues 278–322 (TTTE…STII), 323–367 (TTTE…TTAI), 368–412 (TTTE…TTAM), 413–457 (TTTQ…TTAM), 458–502 (TTTQ…TTAM), 503–547 (TTTQ…TTAM), 548–592 (TTTQ…TTAI), 593–637 (TTTE…TTAI), 638–682 (TTTQ…TTAM), 683–727 (TTTQ…TTAM), 728–772 (TTTQ…GLIS), 773–817 (TTTE…GLVT), and 818–862 (TTTE…ISSS). Positions 278–862 (TTTEPWTGTF…KTPTTAISSS (585 aa)) are 13 X 45 AA approximate tandem repeats, Thr-rich. An N-linked (GlcNAc...) asparagine glycan is attached at Asn329. N-linked (GlcNAc...) asparagine glycans are attached at residues Asn419, Asn464, Asn509, Asn554, Asn599, Asn644, Asn689, and Asn734. 2 disordered regions span residues 770 to 799 (LIST…NGQP) and 816 to 843 (VTTT…TNGQ). Composition is skewed to low complexity over residues 773 to 795 (TTTE…VTGT) and 817 to 840 (TTTT…ITGT). Asn888 is a glycosylation site (N-linked (GlcNAc...) asparagine). Tandem repeats lie at residues 892-906 (VISS…TSSL), 907-921 (VISS…TSSP), and 922-936 (VISS…ISST). Positions 892-936 (VISSSVISSSDTSSLVISSSVTSSLVTSSPVISSSFISSPVISST) are 3 X 15 AA approximate repeats, Ser-rich. A compositionally biased stretch (low complexity) spans 950–1001 (SVIPTSSSTSGSSESETGSASSASSSSSISSESPKSTYSSSSLPPVTSATTS). Positions 950 to 1018 (SVIPTSSSTS…PPVTTTKTSE (69 aa)) are disordered. Positions 1002-1018 (QEITSSLPPVTTTKTSE) are enriched in polar residues. 3 repeat units span residues 1013-1063 (TTKT…CPIS), 1085-1135 (TTET…CPIS), and 1136-1186 (TTES…RPQT). Residues 1013 to 1186 (TTKTSEQTTL…TVYSTWRPQT (174 aa)) are 3 X 51 AA approximate repeats, Thr-rich. Residues 1186 to 1196 (TTNEQSVSSKM) are compositionally biased toward polar residues. Disordered regions lie at residues 1186–1221 (TTNE…AAET) and 1256–1284 (SETG…ASSM). The span at 1197–1221 (NSATSETTTNTGAAETTTSTGAAET) shows a compositional bias: low complexity. A compositionally biased stretch (polar residues) spans 1257–1284 (ETGNTKSLTSSGLSTMSQQPRSTPASSM). The GPI-anchor amidated glycine moiety is linked to residue Gly1299. Residues 1300 to 1322 (SANSLLAGSGLSVFIASLLLAII) constitute a propeptide, removed in mature form.

It belongs to the flocculin family. The GPI-anchor is attached to the protein in the endoplasmic reticulum and serves to target the protein to the cell surface. There, the glucosamine-inositol phospholipid moiety is cleaved off and the GPI-modified mannoprotein is covalently attached via its lipidless GPI glycan remnant to the 1,6-beta-glucan of the outer cell wall layer.

Its subcellular location is the secreted. The protein resides in the cell wall. It localises to the membrane. Its function is as follows. Cell wall protein that participates directly in adhesive cell-cell interactions during yeast flocculation, a reversible, asexual and Ca(2+)-dependent process in which cells adhere to form aggregates (flocs) consisting of thousands of cells. The lectin-like protein sticks out of the cell wall of flocculent cells and selectively binds mannose residues in the cell walls of adjacent cells. The protein is Flocculation protein FLO9 (FLO9) of Saccharomyces cerevisiae (strain ATCC 204508 / S288c) (Baker's yeast).